A 193-amino-acid polypeptide reads, in one-letter code: MGLISSNSTITAPKSKGIIDPNTGELIGSDDRFFCEVNAELSEKGFLVTSADALITWARTGSLMWMSFGLACCAIEMMQCSMPHYDNERFGYAPRASPRQSDVMVVAGTLTNKMAPALRKVYDQMPEPRYVISMGSCANGGGYYHYSYSVVRGCDRIVPVDIYVPGCPPTAEALLYGILLLQKKIRRTGSIER.

The [4Fe-4S] cluster site is built by Cys-72, Cys-73, Cys-137, and Cys-167.

It belongs to the complex I 20 kDa subunit family. NDH-1 is composed of 14 different subunits. Subunits NuoB, C, D, E, F, and G constitute the peripheral sector of the complex. It depends on [4Fe-4S] cluster as a cofactor.

The protein resides in the cell inner membrane. The catalysed reaction is a quinone + NADH + 5 H(+)(in) = a quinol + NAD(+) + 4 H(+)(out). Its function is as follows. NDH-1 shuttles electrons from NADH, via FMN and iron-sulfur (Fe-S) centers, to quinones in the respiratory chain. The immediate electron acceptor for the enzyme in this species is believed to be ubiquinone. Couples the redox reaction to proton translocation (for every two electrons transferred, four hydrogen ions are translocated across the cytoplasmic membrane), and thus conserves the redox energy in a proton gradient. The chain is NADH-quinone oxidoreductase subunit B from Bartonella henselae (strain ATCC 49882 / DSM 28221 / CCUG 30454 / Houston 1) (Rochalimaea henselae).